A 71-amino-acid chain; its full sequence is ATP synthase F(0) complex subunit e, mitochondrial (71 aa).

Lysine 34 is modified (N6-acetyllysine). At serine 68 the chain carries Phosphoserine.

The protein belongs to the ATPase e subunit family. As to quaternary structure, component of the ATP synthase complex composed at least of ATP5F1A/subunit alpha, ATP5F1B/subunit beta, ATP5MC1/subunit c (homooctomer), MT-ATP6/subunit a, MT-ATP8/subunit 8, ATP5ME/subunit e, ATP5MF/subunit f, ATP5MG/subunit g, ATP5MK/subunit k, ATP5MJ/subunit j, ATP5F1C/subunit gamma, ATP5F1D/subunit delta, ATP5F1E/subunit epsilon, ATP5PF/subunit F6, ATP5PB/subunit b, ATP5PD/subunit d, ATP5PO/subunit OSCP. ATP synthase complex consists of a soluble F(1) head domain (subunits alpha(3) and beta(3)) - the catalytic core - and a membrane F(0) domain - the membrane proton channel (subunits c, a, 8, e, f, g, k and j). These two domains are linked by a central stalk (subunits gamma, delta, and epsilon) rotating inside the F1 region and a stationary peripheral stalk (subunits F6, b, d, and OSCP). As to expression, mammary gland, liver, kidney, heart, spleen, brain and lung.

The protein localises to the mitochondrion. Its subcellular location is the mitochondrion inner membrane. In terms of biological role, subunit e, of the mitochondrial membrane ATP synthase complex (F(1)F(0) ATP synthase or Complex V) that produces ATP from ADP in the presence of a proton gradient across the membrane which is generated by electron transport complexes of the respiratory chain. ATP synthase complex consist of a soluble F(1) head domain - the catalytic core - and a membrane F(1) domain - the membrane proton channel. These two domains are linked by a central stalk rotating inside the F(1) region and a stationary peripheral stalk. During catalysis, ATP synthesis in the catalytic domain of F(1) is coupled via a rotary mechanism of the central stalk subunits to proton translocation. In vivo, can only synthesize ATP although its ATP hydrolase activity can be activated artificially in vitro. Part of the complex F(0) domain. This is ATP synthase F(0) complex subunit e, mitochondrial from Mus musculus (Mouse).